We begin with the raw amino-acid sequence, 564 residues long: Phenylalanine--tRNA ligase beta subunit (564 aa).

A B5 domain is found at 286–362; it reads YFQNSLKINV…IGKGLDNFKS (77 aa). 4 residues coordinate Mg(2+): Asp340, Asp346, Glu349, and Glu350.

The protein belongs to the phenylalanyl-tRNA synthetase beta subunit family. Type 2 subfamily. As to quaternary structure, tetramer of two alpha and two beta subunits. Mg(2+) is required as a cofactor.

It is found in the cytoplasm. The enzyme catalyses tRNA(Phe) + L-phenylalanine + ATP = L-phenylalanyl-tRNA(Phe) + AMP + diphosphate + H(+). In Borrelia recurrentis (strain A1), this protein is Phenylalanine--tRNA ligase beta subunit.